The following is a 519-amino-acid chain: Probable cytosol aminopeptidase (519 aa).

The Mn(2+) site is built by lysine 251 and aspartate 256. Lysine 263 is an active-site residue. Mn(2+) is bound by residues aspartate 274, aspartate 333, and glutamate 335. The active site involves arginine 337. Over residues 487–502 (VAPAAPAAPAAPAARP) the composition is skewed to low complexity. Residues 487-519 (VAPAAPAAPAAPAARPAAKRTGRSQGGLKRTAP) are disordered.

Belongs to the peptidase M17 family. It depends on Mn(2+) as a cofactor.

Its subcellular location is the cytoplasm. The catalysed reaction is Release of an N-terminal amino acid, Xaa-|-Yaa-, in which Xaa is preferably Leu, but may be other amino acids including Pro although not Arg or Lys, and Yaa may be Pro. Amino acid amides and methyl esters are also readily hydrolyzed, but rates on arylamides are exceedingly low.. It carries out the reaction Release of an N-terminal amino acid, preferentially leucine, but not glutamic or aspartic acids.. Its function is as follows. Presumably involved in the processing and regular turnover of intracellular proteins. Catalyzes the removal of unsubstituted N-terminal amino acids from various peptides. The polypeptide is Probable cytosol aminopeptidase (Verminephrobacter eiseniae (strain EF01-2)).